The following is a 101-amino-acid chain: Integration host factor subunit beta (101 aa).

A disordered region spans residues 57-76; that stretch reads PARAGRNPRTGEHVPVDQKS.

The protein belongs to the bacterial histone-like protein family. As to quaternary structure, heterodimer of an alpha and a beta chain.

In terms of biological role, this protein is one of the two subunits of integration host factor, a specific DNA-binding protein that functions in genetic recombination as well as in transcriptional and translational control. The protein is Integration host factor subunit beta of Nitrobacter winogradskyi (strain ATCC 25391 / DSM 10237 / CIP 104748 / NCIMB 11846 / Nb-255).